The primary structure comprises 293 residues: ATP synthase gamma chain (293 aa).

Belongs to the ATPase gamma chain family. F-type ATPases have 2 components, CF(1) - the catalytic core - and CF(0) - the membrane proton channel. CF(1) has five subunits: alpha(3), beta(3), gamma(1), delta(1), epsilon(1). CF(0) has three main subunits: a, b and c.

Its subcellular location is the cell inner membrane. Its function is as follows. Produces ATP from ADP in the presence of a proton gradient across the membrane. The gamma chain is believed to be important in regulating ATPase activity and the flow of protons through the CF(0) complex. The protein is ATP synthase gamma chain of Nitrosospira multiformis (strain ATCC 25196 / NCIMB 11849 / C 71).